A 448-amino-acid polypeptide reads, in one-letter code: MSFTPGKQSSSRASSGNRSGNGILKWADQSDQSRNVQTRGRRAQPKQTATSQQPSGGNVVPYYSWFSGITQFQKGKEFEFAEGQGVPIAPGVPATEAKGYWYRHNRRSFKTADGNQRQLLPRWYFYYLGTGPHAKDQYGTDIDGVFWVASNQADVNTPADILDRDPSSDEAIPTRFPPGTVLPQGYYIEGSGRSAPNSRSTSRASSRASSAGSRSRADSGNRTPTSGVTPDMADQIASLVLAKLGKDATKPQQVTKQTAKEIRQKILNKPRQKRSPNKQCTVQQCFGKRGPNQNFGGGEMLKLGTSDPQFPILAELAPTAGAFFFGSRLELAKVQNLSGNLDEPQKDVYELRYNGAIRFDSTLSGFETIMKVLNENLNAYQQQDGMMNMSPKPQRQRGQKNGQGENDNISVAAPKSRVQQNKSRELTAEDISLLKKMDEPYTEDTSEI.

The disordered stretch occupies residues 1-55 (MSFTPGKQSSSRASSGNRSGNGILKWADQSDQSRNVQTRGRRAQPKQTATSQQPS). The segment covering 9-22 (SSSRASSGNRSGNG) has biased composition (low complexity). Composition is skewed to polar residues over residues 29–38 (QSDQSRNVQT) and 45–55 (PKQTATSQQPS). The tract at residues 52–194 (QQPSGGNVVP…GYYIEGSGRS (143 aa)) is RNA-binding. The region spanning 61–190 (PYYSWFSGIT…VLPQGYYIEG (130 aa)) is the CoV N NTD domain. 3 residues coordinate RNA: Arg106, Arg122, and Arg164. Disordered stretches follow at residues 157-231 (TPAD…VTPD), 266-298 (ILNK…FGGG), and 385-448 (GMMN…TSEI). A Phosphoserine; by host modification is found at Ser167. Position 174 is a phosphothreonine; by host (Thr174). Residue Ser191 is modified to Phosphoserine; by host. The span at 193 to 214 (RSAPNSRSTSRASSRASSAGSR) shows a compositional bias: low complexity. The CoV N CTD domain maps to 259-384 (AKEIRQKILN…ENLNAYQQQD (126 aa)). Residues 266–276 (ILNKPRQKRSP) are compositionally biased toward basic residues. Positions 266-384 (ILNKPRQKRS…ENLNAYQQQD (119 aa)) are dimerization. Position 390 is a phosphoserine; by host (Ser390). A compositionally biased stretch (polar residues) spans 399–409 (QKNGQGENDNI). The span at 422–439 (KSRELTAEDISLLKKMDE) shows a compositional bias: basic and acidic residues. At Ser423 the chain carries Phosphoserine; by host. At Thr427 the chain carries Phosphothreonine; by host.

The protein belongs to the betacoronavirus nucleocapsid protein family. In terms of assembly, homooligomer. Both monomeric and oligomeric forms interact with RNA. Interacts with protein M. Interacts with NSP3; this interaction serves to tether the genome to the newly translated replicase-transcriptase complex at a very early stage of infection. ADP-ribosylated. The ADP-ribosylation is retained in the virion during infection. In terms of processing, phosphorylated on serine and threonine residues.

The protein localises to the virion. Its subcellular location is the host endoplasmic reticulum-Golgi intermediate compartment. It is found in the host Golgi apparatus. Packages the positive strand viral genome RNA into a helical ribonucleocapsid (RNP) and plays a fundamental role during virion assembly through its interactions with the viral genome and membrane protein M. Plays an important role in enhancing the efficiency of subgenomic viral RNA transcription as well as viral replication. This Bovine coronavirus (strain LY-138) (BCoV) protein is Nucleoprotein.